A 491-amino-acid chain; its full sequence is Feruloyl-CoA synthase (491 aa).

Position 154 (T154) interacts with Mg(2+). Residues A199, G291, and T295 each coordinate ATP. E296 is a binding site for Mg(2+). D374 and K391 together coordinate ATP.

Belongs to the ATP-dependent AMP-binding enzyme family. The cofactor is Mg(2+).

The catalysed reaction is (E)-ferulate + ATP + CoA = (E)-feruloyl-CoA + AMP + diphosphate. Catalyzes the formation of (E)-feruloyl-CoA, AMP and diphosphate from (E)-ferulate, CoA and ATP. Involved in the degradation pathway of lignin-derived aromatic compounds of plant cell walls. Catalyzes the first enzymatic step in the conversion of ferulic acid into high value compound vanillin. The chain is Feruloyl-CoA synthase from Amycolatopsis sp.